We begin with the raw amino-acid sequence, 78 residues long: MSEVLPYGDEKLSPYGDGGDVGQIFSCRLQDTNNFFGAGQNKRPPKLGQIGRSKRVVIEDDRIDDVLKNMTDKAPPGV.

The interval 41–68 (NKRPPKLGQIGRSKRVVIEDDRIDDVLK) is CAMK2 inhibitory domain.

This sequence belongs to the CAMK2N family. Interacts with CAMK2B; the presence of Ca(2+)/calmodulin increases the interaction but is not essential. Interacts with CAMK2A; this interaction requires CAMK2A activation by Ca(2+).

The protein resides in the synapse. The protein localises to the cell projection. It localises to the dendrite. Its subcellular location is the postsynaptic density. Functionally, potent and specific inhibitor of CaM-kinase II (CAMK2). Plays a role in the maintenance of long-term retrieval-induced memory in response to contextual fear. Modulates blood pressure and vascular reactivity via regulation of CAMK2 activity in addition to regulation of left ventricular mass. Mediates the NLRP3 inflammasome in cardiomyocytes via acting as an inhibitor of the MAPK14/p38 and MAPK8/JNK pathways, thereby regulating ventricular remodeling and cardiac rhythm post-myocardial infarction. Negatively effects insulin sensitivity and promotes lipid formation in adipose tissues independent of CAMK2 signaling. This is Calcium/calmodulin-dependent protein kinase II inhibitor 1 (CAMK2N1) from Homo sapiens (Human).